We begin with the raw amino-acid sequence, 276 residues long: Urease accessory protein UreD (276 aa).

The protein belongs to the UreD family. As to quaternary structure, ureD, UreF and UreG form a complex that acts as a GTP-hydrolysis-dependent molecular chaperone, activating the urease apoprotein by helping to assemble the nickel containing metallocenter of UreC. The UreE protein probably delivers the nickel.

It is found in the cytoplasm. Functionally, required for maturation of urease via the functional incorporation of the urease nickel metallocenter. This is Urease accessory protein UreD from Variovorax paradoxus (strain S110).